The sequence spans 423 residues: Enolase (423 aa).

Gln165 lines the (2R)-2-phosphoglycerate pocket. Catalysis depends on Glu209, which acts as the Proton donor. Mg(2+) contacts are provided by Asp244, Glu285, and Asp310. (2R)-2-phosphoglycerate contacts are provided by Lys335, Arg364, Ser365, and Lys386. The active-site Proton acceptor is Lys335.

This sequence belongs to the enolase family. Homooctamer formed by a tetramer of dimers. It depends on Mg(2+) as a cofactor.

The protein resides in the cytoplasm. The protein localises to the secreted. Its subcellular location is the cell surface. The catalysed reaction is (2R)-2-phosphoglycerate = phosphoenolpyruvate + H2O. Its pathway is carbohydrate degradation; glycolysis; pyruvate from D-glyceraldehyde 3-phosphate: step 4/5. The covalent binding to the substrate causes inactivation of the enzyme, and possibly serves as a signal for the export of the protein. Functionally, catalyzes the reversible conversion of 2-phosphoglycerate (2-PG) into phosphoenolpyruvate (PEP). It is essential for the degradation of carbohydrates via glycolysis. The protein is Enolase of Methanocaldococcus jannaschii (strain ATCC 43067 / DSM 2661 / JAL-1 / JCM 10045 / NBRC 100440) (Methanococcus jannaschii).